The following is a 314-amino-acid chain: Probable cell division protein WhiA (314 aa).

The H-T-H motif DNA-binding region spans 274–308 (SLKELGEMVSTGPISKSGMNHRLRKLNELADKIRN).

Belongs to the WhiA family.

In terms of biological role, involved in cell division and chromosome segregation. This is Probable cell division protein WhiA from Staphylococcus epidermidis (strain ATCC 35984 / DSM 28319 / BCRC 17069 / CCUG 31568 / BM 3577 / RP62A).